We begin with the raw amino-acid sequence, 1202 residues long: Caskin-2 (1202 aa).

ANK repeat units lie at residues 48 to 77, 81 to 110, 114 to 143, 147 to 176, 188 to 217, and 220 to 249; these read DGFS…TVDI, NGMR…AVNA, DGQI…NPCL, AKKT…CVAL, NYTT…EINR, and KTGT…DVNI. Phosphotyrosine is present on tyrosine 253. An SH3 domain is found at 281-347; that stretch reads SGILKVRALK…PPGIVEVVSK (67 aa). Residues 355–460 are disordered; sequence RLPSAPTPLR…GLHPPSLADN (106 aa). Residues serine 358, serine 393, serine 396, serine 403, serine 406, and serine 409 each carry the phosphoserine modification. Positions 415–425 are enriched in polar residues; that stretch reads SAGSGQSSEGT. Serine 471 carries the post-translational modification Phosphoserine. 2 consecutive SAM domains span residues 489 to 552 and 558 to 622; these read KDAQ…LSIA and YIPT…LAEL. 2 disordered regions span residues 676–1104 and 1116–1181; these read LQAA…APKP and GPKL…STKH. A Phosphoserine modification is found at serine 725. Residues 731–740 show a composition bias toward basic and acidic residues; sequence NLPEGTERPP. Residues 765-774 show a composition bias toward pro residues; that stretch reads SPAPGPPPGA. Phosphoserine is present on residues serine 858, serine 877, serine 878, and serine 892. Over residues 913-923 the composition is skewed to pro residues; the sequence is PSEPPGPPAPA. A compositionally biased stretch (low complexity) spans 940 to 949; that stretch reads PPSRGSSGEG. Pro residues-rich tracts occupy residues 966 to 978 and 1018 to 1030; these read PAGP…PVPP and PAAP…PGES. Low complexity predominate over residues 1031–1051; that stretch reads PPASSLPQPEPSSLPAQGVPT. 2 stretches are compositionally biased toward pro residues: residues 1052-1068 and 1124-1133; these read PLAP…PCPG and GPRPVPPPRP. The span at 1135–1151 shows a compositional bias: polar residues; it reads STGTVGPGQAQQRLEQT. The segment covering 1161–1172 has biased composition (basic and acidic residues); that stretch reads AAEKSIGTKEQE.

As to quaternary structure, may not bind CASK.

It is found in the cytoplasm. This Homo sapiens (Human) protein is Caskin-2 (CASKIN2).